We begin with the raw amino-acid sequence, 708 residues long: Retrotransposon-derived protein PEG10 (708 aa).

The stretch at 1-50 (MTERRRDELSEEINNLREKVMKQSEENNNLQSQVQKLTEENTTLREQVEP) forms a coiled coil. A disordered region spans residues 21–74 (MKQSEENNNLQSQVQKLTEENTTLREQVEPTPEDEDDDIELRGAAAAAAPPPPI). Polar residues predominate over residues 26 to 36 (ENNNLQSQVQK). The span at 37–48 (LTEENTTLREQV) shows a compositional bias: basic and acidic residues. The segment at 76 to 275 (EECPEDLPEK…HQVDPTEPVG (200 aa)) is necessary for interaction with ACVRL1. A CCHC-type zinc finger spans residues 293–310 (NLCLYCGTGGHYADNCPA). Residues 310–344 (AKASKSSPAGKLPGPAVEGPSATGPEIIRSPQDDA) form a disordered region. Residues Lys311 and Lys314 each participate in a glycyl lysine isopeptide (Lys-Gly) (interchain with G-Cter in ubiquitin) cross-link. 2 positions are modified to phosphoserine: Ser316 and Leu321. Residues Arg507, Arg598, and Arg611 each carry the omega-N-methylarginine modification. The interval 683-708 (PVPQYPPPQPPPPPPPPPPPPSYSTL) is disordered.

As to quaternary structure, homooligomer; homooligomerizes into virion-like capsids. Interacts with ACVRL1. Interacts with SIAH1 and SIAH2. In terms of processing, undergoes proteolytic cleavage. Expressed in the cytotrophoblast layer but not in the overlying syncytiotrophoblast of the placenta. Expressed in prostate and breast carcinomas but not in normal breast and prostate epithelial cells. Expressed in the Hep-G2 cell line (at protein level). Expressed in brain, liver, spleen, kidney, thymus, lung, ovary, testis, reactive lymph node, skeletal muscle, adipose tissue and placenta. Expressed in pancreatic and hepatocellular carcinomas (HCC).

Its subcellular location is the extracellular vesicle membrane. The protein resides in the cytoplasm. The protein localises to the nucleus. Its function is as follows. Retrotransposon-derived protein that binds its own mRNA and self-assembles into virion-like capsids. Forms virion-like extracellular vesicles that encapsulate their own mRNA and are released from cells, enabling intercellular transfer of PEG10 mRNA. Binds its own mRNA in the 5'-UTR region, in the region near the boundary between the nucleocapsid (NC) and protease (PRO) coding sequences and in the beginning of the 3'-UTR region. Involved in placenta formation: required for trophoblast stem cells differentiation. Involved at the immediate early stage of adipocyte differentiation. Overexpressed in many cancers and enhances tumor progression: promotes cell proliferation by driving cell cycle progression from G0/G1. Enhances cancer progression by inhibiting the TGF-beta signaling, possibly via interaction with the TGF-beta receptor ACVRL1. May bind to the 5'-GCCTGTCTTT-3' DNA sequence of the MB1 domain in the myelin basic protein (MBP) promoter; additional evidences are however required to confirm this result. This chain is Retrotransposon-derived protein PEG10, found in Homo sapiens (Human).